Reading from the N-terminus, the 69-residue chain is Cold shock protein CapB (69 aa).

In terms of domain architecture, CSD spans 7 to 66; the sequence is GTVKWFNDEKGFGFITPQSGDDLFVHFKAIQSDGFKSLKEGQQVSFIATRGQKGMQAEEV.

It is found in the cytoplasm. Its function is as follows. Affects cell viability at low temperatures. In Pseudomonas fragi, this protein is Cold shock protein CapB (capB).